The sequence spans 346 residues: Protein Rae1 (346 aa).

WD repeat units lie at residues 17–61, 64–105, 126–148, and 255–289; these read ASPP…ATVP, MKTM…VMQV, LMTG…PMMT, and VNDI…KLKS.

The protein belongs to the WD repeat rae1 family. In terms of assembly, interacts with hiw; the interaction with Rae1 may protect hiw from autophagy-mediated degradation. Interacts with Nup98-96. Head (at protein level).

It localises to the cytoplasm. The protein resides in the perinuclear region. Its subcellular location is the nucleus. The protein localises to the nucleus envelope. It is found in the chromosome. Its function is as follows. Probable component of the nuclear pore complex (NPC) which regulates the nuclear export of specific mRNAs and promotes cell cycle progression during mitosis and male meiosis. Acts with Nup98-96 to promote the nuclear export of specific mRNAs such as Moe, however it does not appear to be required for general nuclear mRNA transport. Essential mitotic and male meiotic cell cycle regulator with roles in many aspects of the cell cycle including chromatin organization and condensation, spindle assembly, chromosome segregation, and maintaining nuclear structure. During male meiosis it is required for completion of meiosis I, as well as accurate cytokinesis of the secondary spermatocytes, and postmeiotic differentiation of spermatids. Acts as a downstream regulatory target of the Hippo/SWH (Sav/Wts/Hpo) signaling pathway to promote mitotic cell cycle progression and proliferation during wing and eye development, and thereby plays a key role in integrating the regulation of proliferation with organ size control. When the Hippo/SWH signaling pathway is inactive, Rae1 acts independently of yki to increase organ size by promoting mitotic S-phase entry and increase cellular proliferation. When the Hippo/SWH signaling pathway is active it inhibits the activity of Rae1 in a Wts-dependent manner to restrict organ growth. However, Rae1 is also able to negatively regulate the levels and activity of yki likely by activating the core kinases of the Hippo/SWH signaling pathway hpo and Wts and increasing the protein levels of hpo, Mer and Wts; it is therefore likely that it functions as part of a negative feedback loop with the Hippo/SWH signaling pathway to regulate pathway homeostasis and prevent organ overgrowth. Promotes mitotic cell cycle progression, at least in part, by increasing the accumulation of mitotic cyclins such as CycB, possibly by directly up-regulating cyclin transcripts or by inhibiting the anaphase promoting complex/cyclosome (APC/C) activator fzy. Also required in presynaptic, postmitotic motor neurons to restrain synaptic terminal growth. Promotes the expression and stability of the an E3 ubiquitin ligase of hiw, and is likely to function in the regulation of synaptic growth by binding to hiw and protecting it from autophagy-mediated degradation. In Drosophila melanogaster (Fruit fly), this protein is Protein Rae1.